The primary structure comprises 247 residues: MVQKFMSRYQAALLGLGLLLVFLLYMGLPGPPEQTSRLWRGPNVTVLTGLTRGNSRIFYREVLPIQQACRAEVVFLHGKAFNSHTWEQLGTLQLLSERGYRAVAIDLPGFGNSAPSEEVSTEAGRVELLERVFQDLQVQNTVLVSPSLSGSYALPFLMQNHHQLRGFVPIAPTYTRNYAQEQFRAVKTPTLILYGELDHTLARESLQQLRHLPNHSMVKLRDAGHACYLHKPEAFHLALLAFLDHLP.

The chain crosses the membrane as a helical; Signal-anchor for type II membrane protein span at residues 11–31 (AALLGLGLLLVFLLYMGLPGP). Residue N43 is glycosylated (N-linked (GlcNAc...) asparagine). Catalysis depends on charge relay system residues S147, D198, and H225.

Belongs to the AB hydrolase superfamily. ABHD14 family. In terms of tissue distribution, widely expressed. Higher expression is detected in brain, kidney, heart, testis, ovary and uterus.

The protein resides in the cytoplasm. Its subcellular location is the membrane. Possible role in granule neuron development. This Mus musculus (Mouse) protein is Protein ABHD14A.